Consider the following 180-residue polypeptide: Endoribonuclease YbeY (180 aa).

Zn(2+)-binding residues include histidine 118, histidine 122, and histidine 128.

It belongs to the endoribonuclease YbeY family. It depends on Zn(2+) as a cofactor.

It localises to the cytoplasm. In terms of biological role, single strand-specific metallo-endoribonuclease involved in late-stage 70S ribosome quality control and in maturation of the 3' terminus of the 16S rRNA. This chain is Endoribonuclease YbeY, found in Rhodococcus opacus (strain B4).